Reading from the N-terminus, the 341-residue chain is Queuosine 5'-phosphate N-glycosylase/hydrolase (341 aa).

Methionine 1 carries the N-acetylmethionine modification. Positions 53, 237, 239, 314, 315, and 319 each coordinate queuine. The active-site Nucleophile or transition state stabilizer is the aspartate 239.

It belongs to the QNG1 protein family.

The catalysed reaction is queuosine 5'-phosphate + H2O = queuine + D-ribose 5-phosphate. In terms of biological role, catalyzes the hydrolysis of queuosine 5'-phosphate, releasing the nucleobase queuine (q). Is required for salvage of queuine from exogenous queuosine (Q) that is imported and then converted to queuosine 5'-phosphate intracellularly. The protein is Queuosine 5'-phosphate N-glycosylase/hydrolase of Bos taurus (Bovine).